Here is a 293-residue protein sequence, read N- to C-terminus: Acetyl-coenzyme A carboxylase carboxyl transferase subunit beta (293 aa).

In terms of domain architecture, CoA carboxyltransferase N-terminal spans 29-293 (LWVKCSECSQ…GVNELVEANI (265 aa)). Zn(2+) contacts are provided by C33, C36, C52, and C55. The segment at 33–55 (CSECSQVAYRKDLISNFNVCSNC) adopts a C4-type zinc-finger fold.

Belongs to the AccD/PCCB family. In terms of assembly, acetyl-CoA carboxylase is a heterohexamer composed of biotin carboxyl carrier protein (AccB), biotin carboxylase (AccC) and two subunits each of ACCase subunit alpha (AccA) and ACCase subunit beta (AccD). Zn(2+) serves as cofactor.

It is found in the cytoplasm. It catalyses the reaction N(6)-carboxybiotinyl-L-lysyl-[protein] + acetyl-CoA = N(6)-biotinyl-L-lysyl-[protein] + malonyl-CoA. It functions in the pathway lipid metabolism; malonyl-CoA biosynthesis; malonyl-CoA from acetyl-CoA: step 1/1. Its function is as follows. Component of the acetyl coenzyme A carboxylase (ACC) complex. Biotin carboxylase (BC) catalyzes the carboxylation of biotin on its carrier protein (BCCP) and then the CO(2) group is transferred by the transcarboxylase to acetyl-CoA to form malonyl-CoA. The sequence is that of Acetyl-coenzyme A carboxylase carboxyl transferase subunit beta from Prochlorococcus marinus (strain MIT 9215).